Reading from the N-terminus, the 272-residue chain is Endoplasmic reticulum resident protein 27 (272 aa).

The N-terminal stretch at 1–25 (MKITRSRCLILSFVLVCGLVPEVTA) is a signal peptide. Residues 39 to 152 (EPIWLTDVPA…WVTEYSPMIA (114 aa)) enclose the Thioredoxin domain. N91 and N100 each carry an N-linked (GlcNAc...) asparagine glycan. A PDIA3-binding site region spans residues 230–233 (DKWD). The Prevents secretion from ER motif lies at 269-272 (KEEL).

This sequence belongs to the protein disulfide isomerase family. Interacts with PDIA3.

It localises to the endoplasmic reticulum lumen. Functionally, specifically binds unfolded proteins and may recruit protein disulfide isomerase PDIA3 to unfolded substrates. Binds protein substrates via a hydrophobic pocket in the C-terminal domain. May play a role in the unfolded stress response. The protein is Endoplasmic reticulum resident protein 27 (Erp27) of Mus musculus (Mouse).